A 208-amino-acid chain; its full sequence is Small ribosomal subunit protein uS4 (208 aa).

Positions 95–157 constitute an S4 RNA-binding domain; that stretch reads RRIDNVVYRA…DSLKKLVRSN (63 aa).

This sequence belongs to the universal ribosomal protein uS4 family. Part of the 30S ribosomal subunit. Contacts protein S5. The interaction surface between S4 and S5 is involved in control of translational fidelity.

Functionally, one of the primary rRNA binding proteins, it binds directly to 16S rRNA where it nucleates assembly of the body of the 30S subunit. In terms of biological role, with S5 and S12 plays an important role in translational accuracy. The sequence is that of Small ribosomal subunit protein uS4 from Borrelia hermsii (strain HS1 / DAH).